Consider the following 176-residue polypeptide: Large ribosomal subunit protein uL6 (176 aa).

It belongs to the universal ribosomal protein uL6 family. As to quaternary structure, part of the 50S ribosomal subunit.

Functionally, this protein binds to the 23S rRNA, and is important in its secondary structure. It is located near the subunit interface in the base of the L7/L12 stalk, and near the tRNA binding site of the peptidyltransferase center. The protein is Large ribosomal subunit protein uL6 of Methanospirillum hungatei JF-1 (strain ATCC 27890 / DSM 864 / NBRC 100397 / JF-1).